Reading from the N-terminus, the 259-residue chain is Transcription factor bHLH80 (259 aa).

Residues 1–25 are disordered; that stretch reads MQSTHISGGSSGGGGGGGGEVSRSG. A compositionally biased stretch (gly residues) spans 9–20; the sequence is GSSGGGGGGGGE. The 51-residue stretch at 187 to 237 folds into the bHLH domain; that stretch reads CATHPRSIAERVRRTRISDRIRRLQELVPNMDKQTNTADMLEEAVEYVKAL.

Homodimer. In terms of tissue distribution, expressed constitutively in roots, leaves, stems, and flowers.

The protein resides in the nucleus. The sequence is that of Transcription factor bHLH80 (BHLH80) from Arabidopsis thaliana (Mouse-ear cress).